The primary structure comprises 167 residues: Regulatory protein RecX (167 aa).

A disordered region spans residues 19–49 (ESELRRKLASQPFSAKGHWGKQTGRSDNEPV).

It belongs to the RecX family.

It localises to the cytoplasm. Modulates RecA activity. This is Regulatory protein RecX from Yersinia enterocolitica serotype O:8 / biotype 1B (strain NCTC 13174 / 8081).